The following is a 283-amino-acid chain: Digeranylgeranylglyceryl phosphate synthase (283 aa).

A run of 8 helical transmembrane segments spans residues 5 to 27 (VEII…AILA), 37 to 57 (AMLA…YFDY), 85 to 105 (LLFI…DTWI), 128 to 148 (PLIG…FAGY), 152 to 172 (EGLI…MTTA), 203 to 223 (AIIA…LYIY), 228 to 248 (INYL…AVLL), and 263 to 283 (LKTG…TITF).

This sequence belongs to the UbiA prenyltransferase family. DGGGP synthase subfamily. Mg(2+) is required as a cofactor.

It localises to the cell membrane. It catalyses the reaction sn-3-O-(geranylgeranyl)glycerol 1-phosphate + (2E,6E,10E)-geranylgeranyl diphosphate = 2,3-bis-O-(geranylgeranyl)-sn-glycerol 1-phosphate + diphosphate. It functions in the pathway membrane lipid metabolism; glycerophospholipid metabolism. Its function is as follows. Prenyltransferase that catalyzes the transfer of the geranylgeranyl moiety of geranylgeranyl diphosphate (GGPP) to the C2 hydroxyl of (S)-3-O-geranylgeranylglyceryl phosphate (GGGP). This reaction is the second ether-bond-formation step in the biosynthesis of archaeal membrane lipids. In Methanobrevibacter smithii (strain ATCC 35061 / DSM 861 / OCM 144 / PS), this protein is Digeranylgeranylglyceryl phosphate synthase.